Consider the following 711-residue polypeptide: Protein Smaug homolog 1 (711 aa).

The residue at position 168 (serine 168) is a Phosphoserine. Residues 278-323 (ARGPQCLPSDHAPLSPQSSVASSGSGGSEHLEDQTTARNTFQEEGS) are disordered. In terms of domain architecture, SAM spans 323–396 (SGMKDVPAWL…LKSLERDIIE (74 aa)). The residue at position 420 (serine 420) is a Phosphoserine. Disordered stretches follow at residues 422-448 (STTP…SAAA) and 565-588 (NRGF…GRRN). Threonine 424 carries the phosphothreonine modification. Arginine 566 carries the omega-N-methylarginine modification. Residues 568-581 (FGQSNSLPTASSVG) are compositionally biased toward polar residues. Position 573 is a phosphoserine (serine 573).

This sequence belongs to the SMAUG family. Expressed in brain (at protein level).

The protein localises to the cytoplasm. Its subcellular location is the cell projection. It localises to the dendrite. It is found in the synapse. The protein resides in the synaptosome. In terms of biological role, acts as a translational repressor of SRE-containing messengers. This chain is Protein Smaug homolog 1 (Samd4a), found in Mus musculus (Mouse).